A 217-amino-acid chain; its full sequence is Large ribosomal subunit protein uL3 (217 aa).

The segment at G127–A162 is disordered. Positions A142–G153 are enriched in low complexity.

The protein belongs to the universal ribosomal protein uL3 family. Part of the 50S ribosomal subunit. Forms a cluster with proteins L14 and L19.

One of the primary rRNA binding proteins, it binds directly near the 3'-end of the 23S rRNA, where it nucleates assembly of the 50S subunit. This chain is Large ribosomal subunit protein uL3, found in Prochlorococcus marinus (strain AS9601).